A 168-amino-acid polypeptide reads, in one-letter code: Troponin I, cardiac muscle (168 aa).

Residues valine 128 to valine 147 are compositionally biased toward basic and acidic residues. Residues valine 128–glycine 168 form a disordered region.

It belongs to the troponin I family. As to quaternary structure, binds to actin and tropomyosin.

Its function is as follows. Troponin I is the inhibitory subunit of troponin, the thin filament regulatory complex which confers calcium-sensitivity to striated muscle actomyosin ATPase activity. This chain is Troponin I, cardiac muscle (TNNI3), found in Gallus gallus (Chicken).